Reading from the N-terminus, the 439-residue chain is Oocyte zinc finger protein XlCOF28 (439 aa).

9 consecutive C2H2-type zinc fingers follow at residues 6-28 (YECT…QRTH), 34-56 (FKCT…KKCH), 62-84 (YMCT…IRTH), 90-112 (FTCT…LRIH), 118-140 (HKCN…QRTH), 146-168 (FQCT…LRIH), 174-196 (YKCS…QRTH), 202-224 (FQCS…ERTH), and 230-252 (YKCS…QKTH). Disordered stretches follow at residues 246 to 275 (KLHQ…APKT) and 285 to 304 (AGLE…ESPE). 4 C2H2-type zinc fingers span residues 333–355 (HKCT…QRTH), 361–383 (FKCS…RKIH), 389–411 (YTCA…RRTH), and 417–439 (YICA…QRIH).

This sequence belongs to the krueppel C2H2-type zinc-finger protein family.

The protein localises to the nucleus. May be involved in transcriptional regulation. This is Oocyte zinc finger protein XlCOF28 from Xenopus laevis (African clawed frog).